The primary structure comprises 686 residues: DNA topoisomerase 1 (686 aa).

The Toprim domain occupies 1 to 141 (MILIIAEKPN…KRMKFSALTK (141 aa)). E7 and D107 together coordinate Mg(2+). Residues 156 to 574 (NFGMANAGIA…EAKERLTKIL (419 aa)) enclose the Topo IA-type catalytic domain. Positions 196–201 (STGRVQ) are interaction with DNA. Y317 acts as the O-(5'-phospho-DNA)-tyrosine intermediate in catalysis. The C4-type 1 zinc-finger motif lies at 606-634 (CPKCGGDLIVKYNKKTGKRFVGCSNWPKC). A C4-type 2; atypical zinc finger spans residues 653–678 (CCNGAPVVIIREEDGREFEICLDINC).

Belongs to the type IA topoisomerase family. In terms of assembly, monomer. Mg(2+) is required as a cofactor.

It carries out the reaction ATP-independent breakage of single-stranded DNA, followed by passage and rejoining.. Its function is as follows. Releases the supercoiling and torsional tension of DNA, which is introduced during the DNA replication and transcription, by transiently cleaving and rejoining one strand of the DNA duplex. Introduces a single-strand break via transesterification at a target site in duplex DNA. The scissile phosphodiester is attacked by the catalytic tyrosine of the enzyme, resulting in the formation of a DNA-(5'-phosphotyrosyl)-enzyme intermediate and the expulsion of a 3'-OH DNA strand. The free DNA strand then undergoes passage around the unbroken strand, thus removing DNA supercoils. Finally, in the religation step, the DNA 3'-OH attacks the covalent intermediate to expel the active-site tyrosine and restore the DNA phosphodiester backbone. This is DNA topoisomerase 1 from Pyrococcus horikoshii (strain ATCC 700860 / DSM 12428 / JCM 9974 / NBRC 100139 / OT-3).